We begin with the raw amino-acid sequence, 678 residues long: Vacuolar fusion protein mon1 (678 aa).

Disordered regions lie at residues 1 to 116 (MDRD…YTSP), 449 to 474 (EENNSNNTNNPEQPPQPPPPKPVTSP), and 568 to 591 (FETSSPPLPSSSPSENGSSQKTTE). Low complexity predominate over residues 10 to 20 (NDGTNDNNDTT). Over residues 63–77 (RPTTQVSTIDISTLS) the composition is skewed to polar residues. A compositionally biased stretch (low complexity) spans 87 to 105 (STSATSATSATSATRSVAS). Positions 106 to 116 (PQSSASGYTSP) are enriched in polar residues. The segment covering 450 to 459 (ENNSNNTNNP) has biased composition (low complexity). Positions 460-471 (EQPPQPPPPKPV) are enriched in pro residues.

The protein belongs to the MON1/SAND family.

It localises to the endosome. It is found in the multivesicular body membrane. Its subcellular location is the prevacuolar compartment membrane. The protein resides in the vacuole membrane. In complex with CCZ1, is required for multiple vacuole delivery pathways including the cytoplasm to vacuole transport (Cvt), autophagy, pexophagy and endocytosis. The MON1-CCZ1 complex acts at the fusion of vesicles with the vacuole, through its regulation of the SNARE complex during the coordinated priming and docking stages of fusion, and particularly at the stage of tethering/docking. This Neurospora crassa (strain ATCC 24698 / 74-OR23-1A / CBS 708.71 / DSM 1257 / FGSC 987) protein is Vacuolar fusion protein mon1 (apg-13).